The sequence spans 456 residues: Adenylosuccinate lyase (456 aa).

Residues 15 to 16 (RY), 90 to 92 (NHD), and 122 to 123 (TS) contribute to the N(6)-(1,2-dicarboxyethyl)-AMP site. The active-site Proton donor/acceptor is H171. Residue Q247 participates in N(6)-(1,2-dicarboxyethyl)-AMP binding. Residue S295 is the Proton donor/acceptor of the active site. N(6)-(1,2-dicarboxyethyl)-AMP-binding positions include S296, 301 to 303 (KVN), N309, R335, and 340 to 344 (STVLR).

Belongs to the lyase 1 family. Adenylosuccinate lyase subfamily. As to quaternary structure, homotetramer. Residues from neighboring subunits contribute catalytic and substrate-binding residues to each active site.

The enzyme catalyses N(6)-(1,2-dicarboxyethyl)-AMP = fumarate + AMP. It catalyses the reaction (2S)-2-[5-amino-1-(5-phospho-beta-D-ribosyl)imidazole-4-carboxamido]succinate = 5-amino-1-(5-phospho-beta-D-ribosyl)imidazole-4-carboxamide + fumarate. Its pathway is purine metabolism; AMP biosynthesis via de novo pathway; AMP from IMP: step 2/2. It functions in the pathway purine metabolism; IMP biosynthesis via de novo pathway; 5-amino-1-(5-phospho-D-ribosyl)imidazole-4-carboxamide from 5-amino-1-(5-phospho-D-ribosyl)imidazole-4-carboxylate: step 2/2. In terms of biological role, catalyzes two reactions in de novo purine nucleotide biosynthesis. Catalyzes the breakdown of 5-aminoimidazole- (N-succinylocarboxamide) ribotide (SAICAR or 2-[5-amino-1-(5-phospho-beta-D-ribosyl)imidazole-4-carboxamido]succinate) to 5-aminoimidazole-4-carboxamide ribotide (AICAR or 5-amino-1-(5-phospho-beta-D-ribosyl)imidazole-4-carboxamide) and fumarate, and of adenylosuccinate (ADS or N(6)-(1,2-dicarboxyethyl)-AMP) to adenosine monophosphate (AMP) and fumarate. The sequence is that of Adenylosuccinate lyase (purB) from Legionella pneumophila (strain Corby).